A 659-amino-acid chain; its full sequence is Homeobox protein slou (659 aa).

Polar residues predominate over residues 1–21; the sequence is MVMLQSPAQKASDSASAQNTA. 6 disordered regions span residues 1-63, 94-152, 198-298, 316-349, 376-440, and 455-548; these read MVML…PAAK, MSSE…SFSS, AQQH…AAPS, TQASSTSALASASNSVSNASISISNSSSGSPSGR, QIAA…DRDA, and PNKF…PRRA. Composition is skewed to low complexity over residues 27-51, 95-108, and 120-135; these read SPNSNPDSPKSNTSPDVASADSVVS, SSESGSLLSRLSPL, and HNNNNSLTNHNANSNT. Over residues 136 to 152 the composition is skewed to polar residues; the sequence is RRSQSPPASVGSVSFSS. Residues 201 to 232 show a composition bias toward basic residues; it reads HMHHHQHQHHQHPAHPHSHQHPHPHPHPHPHP. 7 consecutive repeat copies span residues 221 to 222, 223 to 224, 225 to 226, 227 to 228, 229 to 230, 231 to 232, and 233 to 234. Residues 221–234 form a 7 X 2 AA tandem repeats of H-P region; that stretch reads HPHPHPHPHPHPHP. Composition is skewed to pro residues over residues 250 to 263 and 275 to 286; these read PPSPATSPLSPPTS and PIAPPQNPPHSS. Composition is skewed to low complexity over residues 287–298 and 316–347; these read QPPQQQQVAAPS and TQASSTSALASASNSVSNASISISNSSSGSPS. A compositionally biased stretch (acidic residues) spans 388 to 401; sequence SEELNVDGNDEDSN. Residues 417-435 are compositionally biased toward low complexity; that stretch reads RSVNSSAAANPSSASTSAS. Acidic residues-rich tracts occupy residues 478–492 and 500–519; these read RDEEMQERLDDDQSE and NDMDQDDMCDDGSDIDDPSS. The span at 528–543 shows a compositional bias: gly residues; it reads SRNGDGKSGGGGGGGS. Residues 545–604 constitute a DNA-binding region (homeobox); sequence PRRARTAFTYEQLVSLENKFKTTRYLSVCERLNLALSLSLTETQVKIWFQNRRTKWKKQN.

This sequence belongs to the NK-1 homeobox family. In terms of tissue distribution, mesodermal precursor cells of distinct muscles during embryogenesis, a subset of neuronal cells of the CNS and their precursors and also in cells of a small region of the midgut.

Its subcellular location is the nucleus. Its function is as follows. May play a role in specifying the identity of particular somatic muscles and neurons of the CNS. This chain is Homeobox protein slou (slou), found in Drosophila melanogaster (Fruit fly).